Reading from the N-terminus, the 467-residue chain is MERAAERLARQRARGLWRSRFACCVAAEPSGSRLGQSVRGAAAAPARCAAEGSADLYLAVNNEGPEVAPPARTGPPDADGIEGGAAVAGNEQGGVAAGNERRAATGDEKESASGGENESESESESESESESGADDGDWDDDDDAGPAGGVTREEAEGAARALNFRIIRRLTPGSEGRVFEATGPAPAQEHVVLKIGASASTLAEAMLLRTLDHANVVKLKAVLFHGELVCAVLARYREDLHTHLWKIDRPMALPTALQVTRAVLQGLAYLHSRRIAHRDVKTENVFLNGPGDVCLGDFGAAHGPVTEPRYYGLAGTLETNSPELLARARYDCRTDVWSAGVVAYEMLAYPRALFDSPAGPQGEDAEASGPPTILGDRDCARQLLRVIRRLAVHAEEFPPSPTDRLTRNFKRHAATGREPHSPYRCLAVLRLPCDADRLLHQMLTFDFRARPTAAELLEHPVFGAASG.

The interval 64 to 155 (GPEVAPPART…PAGGVTREEA (92 aa)) is disordered. Residues 99–111 (NERRAATGDEKES) are compositionally biased toward basic and acidic residues. A compositionally biased stretch (acidic residues) spans 117–144 (NESESESESESESESGADDGDWDDDDDA). Residues 164-462 (FRIIRRLTPG…AAELLEHPVF (299 aa)) form the Protein kinase domain. ATP contacts are provided by residues 170–178 (LTPGSEGRV) and Lys-194. Asp-279 serves as the catalytic Proton acceptor.

It belongs to the protein kinase superfamily. Ser/Thr protein kinase family. Phosphorylated by UL13 homolog; this phosphorylation regulates subsequent phosphorylation of UL31 and UL34 homologs by US3. Autophosphorylated.

It is found in the host cytoplasm. Its subcellular location is the host nucleus. It catalyses the reaction L-seryl-[protein] + ATP = O-phospho-L-seryl-[protein] + ADP + H(+). The enzyme catalyses L-threonyl-[protein] + ATP = O-phospho-L-threonyl-[protein] + ADP + H(+). Functionally, multifunctional serine/threonine kinase that plays a role in several processes including egress of virus particles from the nucleus, modulation of the actin cytoskeleton and inhibition of apoptosis. Phosphorylates UL31 and UL34 homologs, two critical regulators of capsid budding from nucleus to endoplasmic reticulum, thereby facilitating virion egress. Modulates and redistributes host components of the nuclear envelope, including LMNA, emerin/EMD and the nuclear matrix protein MATR3. Phosphorylates envelope glycoprotein B (gB), probably to direct it to the cell surface. Promotes virus intracellular spread by restructuring host cell cytoskeleton. Blocks host apoptosis to extend cell survival and allow efficient viral replication. Promotes viral gene expression by phosphorylating host HDAC2 to reduce viral genome silencing. This Bos taurus (Bovine) protein is Serine/threonine-protein kinase US3 homolog.